The sequence spans 71 residues: uncharacterized protein (71 aa).

The signal sequence occupies residues 1–19 (MFLFPSLLSSFCITLRSIS).

This is an uncharacterized protein from Pasteurella multocida (strain Pm70).